A 257-amino-acid chain; its full sequence is MLFLLSPAKKLDYDSPVHVETHTQPLFVDQAAALIKVLKTKSADEIAELMSLSPALAELNAGRYGAWKRSFTQANSRQAVLAFNGDVYEGLQADTLSARQLDWAQDHVVILSGLYGALRPLDLMQPYRLEMGTRLHTPKGKNLYEYWGSGIAEYLNERQAGAKAPVIVNLASEEYFKVVDLKTLKARVVQCVFQDWKNGAWKVISFHAKRARGLMARYAIAHKVARPEGLQGFDSEGYAYDAAASSADKLVFRRKQA.

This sequence belongs to the UPF0246 family.

In Bordetella parapertussis (strain 12822 / ATCC BAA-587 / NCTC 13253), this protein is UPF0246 protein BPP3440.